An 880-amino-acid chain; its full sequence is Potassium transport protein 2 (880 aa).

N-linked (GlcNAc...) asparagine glycosylation occurs at asparagine 9. 2 helical membrane-spanning segments follow: residues 28–48 and 84–104; these read FVQDSFIIGMTILCSVILYGS and TILLFGVLSTPITVNLGLTLF. Residues 157–182 are disordered; it reads MHRPVAPETKAEEAEHQENEKHHRHH. A compositionally biased stretch (basic and acidic residues) spans 165–177; sequence TKAEEAEHQENEK. N-linked (GlcNAc...) asparagine glycosylation is found at asparagine 239, asparagine 283, asparagine 293, asparagine 294, asparagine 321, asparagine 443, and asparagine 460. Positions 289–315 are enriched in polar residues; that stretch reads HHLDNNSSISSHNPSLETANDGNQETV. The interval 289–344 is disordered; that stretch reads HHLDNNSSISSHNPSLETANDGNQETVSSSNSNYSTTRVDNDPHVASYSPQNSNFD. Residues 316–325 show a composition bias toward low complexity; the sequence is SSSNSNYSTT. 6 consecutive transmembrane segments (helical) span residues 494–514, 571–591, 625–645, 684–704, 756–776, and 787–807; these read ILVVYFLFWHILGLVAFLIFI, LIFLGNTFFPIMLRFIIWIMI, WVLFLNLTLLNFASFFFFMVL, IAPAVMVTYMFMMYISAYPIA, QLSHDLWYLFLGYFIITIVEG, and FTLFAILFEVISGYGTVGLSL. Positions 857 to 880 are disordered; that stretch reads REEEDYMRRHGKKNTNRADPVPSS.

It belongs to the TrkH potassium transport family.

The protein localises to the cell membrane. Together with TRK1, defines the major, high-affinity potassium influx transport system. Involved in maintenance of the proper sodium/potassium ratio in the cell and in regulating the plasma membrane potential. The protein is Potassium transport protein 2 (trk2) of Schizosaccharomyces pombe (strain 972 / ATCC 24843) (Fission yeast).